Here is a 631-residue protein sequence, read N- to C-terminus: Glutamyl-tRNA(Gln) amidotransferase subunit E (631 aa).

Belongs to the GatB/GatE family. GatE subfamily. As to quaternary structure, heterodimer of GatD and GatE.

The enzyme catalyses L-glutamyl-tRNA(Gln) + L-glutamine + ATP + H2O = L-glutaminyl-tRNA(Gln) + L-glutamate + ADP + phosphate + H(+). In terms of biological role, allows the formation of correctly charged Gln-tRNA(Gln) through the transamidation of misacylated Glu-tRNA(Gln) in organisms which lack glutaminyl-tRNA synthetase. The reaction takes place in the presence of glutamine and ATP through an activated gamma-phospho-Glu-tRNA(Gln). The GatDE system is specific for glutamate and does not act on aspartate. The protein is Glutamyl-tRNA(Gln) amidotransferase subunit E of Methanococcus maripaludis (strain C6 / ATCC BAA-1332).